The chain runs to 236 residues: UPF0257 lipoprotein YnfC (236 aa).

The first 16 residues, 1–16 (MKKPLLLTLLCMILAG), serve as a signal peptide directing secretion. C17 carries the N-palmitoyl cysteine lipid modification. C17 carries the S-diacylglycerol cysteine lipid modification.

This sequence belongs to the UPF0257 family.

Its subcellular location is the cell membrane. This is UPF0257 lipoprotein YnfC from Salmonella paratyphi C (strain RKS4594).